Consider the following 360-residue polypeptide: S-adenosylmethionine:tRNA ribosyltransferase-isomerase (360 aa).

Belongs to the QueA family. As to quaternary structure, monomer.

It localises to the cytoplasm. It catalyses the reaction 7-aminomethyl-7-carbaguanosine(34) in tRNA + S-adenosyl-L-methionine = epoxyqueuosine(34) in tRNA + adenine + L-methionine + 2 H(+). The protein operates within tRNA modification; tRNA-queuosine biosynthesis. In terms of biological role, transfers and isomerizes the ribose moiety from AdoMet to the 7-aminomethyl group of 7-deazaguanine (preQ1-tRNA) to give epoxyqueuosine (oQ-tRNA). The sequence is that of S-adenosylmethionine:tRNA ribosyltransferase-isomerase from Rhodopseudomonas palustris (strain ATCC BAA-98 / CGA009).